The chain runs to 415 residues: T-cell-specific guanine nucleotide triphosphate-binding protein 1 (415 aa).

Residues 55-237 (APLHIAVTGE…PKLETKLLQD (183 aa)) form the IRG-type G domain. Gly66, Gly68, Lys69, and Ser70 together coordinate GDP. Position 89 is a (Microbial infection) Phosphothreonine; by ROP17 (Thr89). GDP contacts are provided by Gly90, Lys171, Asp173, and Asn219.

It belongs to the TRAFAC class dynamin-like GTPase superfamily. IRG family. Monomer, homodimer or homotetramer in the presence of GTP. Forms higher order homooligomers in GTP-dependent manner. In terms of assembly, (Microbial infection) Interacts with Toxoplasma gondii ROP18. Post-translationally, (Microbial infection) Phosphorylated by Toxoplasma gondii ROP17; the phosphorylation leads to disassembly of IRGB6 (TGTP1/TGTP2) polymers into monomers and dimers. Phosphorylated by Toxoplasma gondii ROP18. In terms of tissue distribution, expressed in thymus and lymph nodes, predominantly T-cells. Not expressed by immature CD4(+) CD8(+) thymocytes (at protein level). Expressed in IFNG-stimulated macrophages. Expressed at low levels in unstimulated astrocytes. Due to sequence similarity with Tgtp2, it is impossible to assign unambiguously experimental data published in the literature to Tgtp1 or Tgtp2 gene.

It is found in the cytoplasm. Its subcellular location is the endoplasmic reticulum. The protein localises to the golgi apparatus. The protein resides in the parasitophorous vacuole membrane. It catalyses the reaction GTP + H2O = GDP + phosphate + H(+). In terms of biological role, involved in innate cell-autonomous resistance to intracellular pathogens, such as Toxoplasma gondii. During avirulent type II T.gondii infection, recruited to the parasitophorous vacuole (PV) membrane, leading to PV vesiculation and rupture, and subsequent digestion of the parasite within the cytosol. Not recruited to virulent type I T.gondii PV membrane. May confer an antiviral state for vesicular stomatitis virus. This chain is T-cell-specific guanine nucleotide triphosphate-binding protein 1 (Tgtp1), found in Mus musculus (Mouse).